The sequence spans 249 residues: Undecaprenyl-diphosphatase (249 aa).

8 helical membrane passes run 11–31 (GLTE…TAIF), 35–55 (PDVG…LIFV), 80–100 (LVLS…FIES), 101–121 (VFSS…LMLL), 135–155 (IPYF…LPGI), 180–200 (FLMS…NVAF), 202–222 (TEQI…LYLV), and 226–246 (VIGG…FFVL).

The protein belongs to the UppP family.

It localises to the cell membrane. The enzyme catalyses di-trans,octa-cis-undecaprenyl diphosphate + H2O = di-trans,octa-cis-undecaprenyl phosphate + phosphate + H(+). Its function is as follows. Catalyzes the dephosphorylation of undecaprenyl diphosphate (UPP). The polypeptide is Undecaprenyl-diphosphatase (Methanococcus maripaludis (strain C7 / ATCC BAA-1331)).